Consider the following 450-residue polypeptide: Tubulin beta chain (450 aa).

GTP is bound by residues Glu-69, Ser-138, Gly-142, Thr-143, Gly-144, Asn-204, and Asn-226. Glu-69 lines the Mg(2+) pocket. Residues 427 to 450 are disordered; that stretch reads DATIDQEFEDEEEVEEQNDDSDEQ. Acidic residues predominate over residues 430–450; sequence IDQEFEDEEEVEEQNDDSDEQ.

This sequence belongs to the tubulin family. In terms of assembly, dimer of alpha and beta chains. A typical microtubule is a hollow water-filled tube with an outer diameter of 25 nm and an inner diameter of 15 nM. Alpha-beta heterodimers associate head-to-tail to form protofilaments running lengthwise along the microtubule wall with the beta-tubulin subunit facing the microtubule plus end conferring a structural polarity. Microtubules usually have 13 protofilaments but different protofilament numbers can be found in some organisms and specialized cells. It depends on Mg(2+) as a cofactor.

The protein localises to the cytoplasm. The protein resides in the cytoskeleton. Its function is as follows. Tubulin is the major constituent of microtubules, a cylinder consisting of laterally associated linear protofilaments composed of alpha- and beta-tubulin heterodimers. Microtubules grow by the addition of GTP-tubulin dimers to the microtubule end, where a stabilizing cap forms. Below the cap, tubulin dimers are in GDP-bound state, owing to GTPase activity of alpha-tubulin. The sequence is that of Tubulin beta chain from Bombyx mori (Silk moth).